Reading from the N-terminus, the 380-residue chain is Putative glutamate--cysteine ligase 2-2 (380 aa).

Belongs to the glutamate--cysteine ligase type 2 family. YbdK subfamily.

The enzyme catalyses L-cysteine + L-glutamate + ATP = gamma-L-glutamyl-L-cysteine + ADP + phosphate + H(+). ATP-dependent carboxylate-amine ligase which exhibits weak glutamate--cysteine ligase activity. This is Putative glutamate--cysteine ligase 2-2 from Nocardia farcinica (strain IFM 10152).